A 346-amino-acid chain; its full sequence is Bifunctional phosphatase IMPL2, chloroplastic (346 aa).

A chloroplast-targeting transit peptide spans 1–61; the sequence is MLAQSHFFSK…VSRRRFCLTM (61 aa). Mg(2+) is bound by residues E147, D165, and D168. Position 147 (E147) interacts with substrate. Residues 167–170, 263–265, E282, and D289 each bind substrate; these read IDGT and GCD. Mg(2+) is bound at residue D289.

Belongs to the inositol monophosphatase superfamily. Requires Mg(2+) as cofactor. Ubiquitous. High expression in roots. Expressed in pistil and seed endosperm.

Its subcellular location is the plastid. It localises to the chloroplast. The enzyme catalyses a myo-inositol phosphate + H2O = myo-inositol + phosphate. It carries out the reaction L-histidinol phosphate + H2O = L-histidinol + phosphate. It catalyses the reaction beta-L-galactose 1-phosphate + H2O = L-galactose + phosphate. It participates in amino-acid biosynthesis; L-histidine biosynthesis; L-histidine from 5-phospho-alpha-D-ribose 1-diphosphate: step 8/9. Its pathway is polyol metabolism; myo-inositol biosynthesis; myo-inositol from D-glucose 6-phosphate: step 2/2. Functionally, phosphatase required for histidine production. Also acts on L-galactose 1-phosphate (L-Gal 1-P), D-myoinositol 3-phosphate (D-Ins 3-P) and D-myoinositol 1-phosphate (D-Ins 1-P). This is Bifunctional phosphatase IMPL2, chloroplastic (HISN7) from Arabidopsis thaliana (Mouse-ear cress).